Consider the following 41-residue polypeptide: Large ribosomal subunit protein bL36 (41 aa).

This sequence belongs to the bacterial ribosomal protein bL36 family.

The protein is Large ribosomal subunit protein bL36 of Orientia tsutsugamushi (strain Boryong) (Rickettsia tsutsugamushi).